A 277-amino-acid polypeptide reads, in one-letter code: MALKHFKPVTPGLRQLVIVDRSGLYKGKPVKTLTEGKSSSGGRNNNGRITVRFRGGGHKQTYRLVDFKRAKRDVSATVERLEYDPNRTAFIALIKYEDGELAYILAPQRLAVGDKVIAGEQVDVKPGNAAPLSNLPVGTIVHNVEMKIGKGGQIARSAGSYAQIVGRDQGYVIVRLNSGEQRLIHGACYATVGAVSNPDHMNTSLGKAGRSRWLGVKPHNRGVTMNPVDHPHGGGEGRTSGGRHPVTPWGKPTKGMKTRSNKATDKFIVTSRHKRKK.

Residues 223–277 (VTMNPVDHPHGGGEGRTSGGRHPVTPWGKPTKGMKTRSNKATDKFIVTSRHKRKK) form a disordered region.

Belongs to the universal ribosomal protein uL2 family. In terms of assembly, part of the 50S ribosomal subunit. Forms a bridge to the 30S subunit in the 70S ribosome.

One of the primary rRNA binding proteins. Required for association of the 30S and 50S subunits to form the 70S ribosome, for tRNA binding and peptide bond formation. It has been suggested to have peptidyltransferase activity; this is somewhat controversial. Makes several contacts with the 16S rRNA in the 70S ribosome. This Azorhizobium caulinodans (strain ATCC 43989 / DSM 5975 / JCM 20966 / LMG 6465 / NBRC 14845 / NCIMB 13405 / ORS 571) protein is Large ribosomal subunit protein uL2.